Consider the following 179-residue polypeptide: Transcriptional regulator ICP22 homolog (179 aa).

Residues 1–12 (MSRDRDRARPDT) show a composition bias toward basic and acidic residues. The disordered stretch occupies residues 1–40 (MSRDRDRARPDTRLSSSDNESDDEDYQLPHSHPEYGSDSS).

This sequence belongs to the herpesviridae ICP22 family.

The polypeptide is Transcriptional regulator ICP22 homolog (MDV088) (Gallid herpesvirus 2 (strain Chicken/Md5/ATCC VR-987) (GaHV-2)).